A 637-amino-acid polypeptide reads, in one-letter code: Early transcription factor 70 kDa subunit (637 aa).

The protein belongs to the helicase family. VETF subfamily. In terms of assembly, heterodimer of a 70 kDa and a 82 kDa subunit. Part of the early transcription complex composed of ETF, RAP94/OPG109, and the DNA-directed RNA polymerase. In terms of processing, apparently non-glycosylated.

The protein localises to the virion. Its function is as follows. Acts with RNA polymerase to initiate transcription from early gene promoters. Is recruited by the RPO-associated protein of 94 kDa RAP94/OPG109 to form the early transcription complex, which also contains the core RNA polymerase. ETF heterodimer binds to early gene promoters. In Monkeypox virus, this protein is Early transcription factor 70 kDa subunit (OPG118).